The following is a 770-amino-acid chain: Transcription activator AMTR1 (770 aa).

Residues Cys-7–Cys-34 constitute a DNA-binding region (zn(2)-C6 fungal-type).

The protein localises to the nucleus. Its function is as follows. Transcription factor that regulates the expression of the gene clusters that mediate the biosynthesis of AM-toxins, host-selective toxins (HSTs) causing Alternaria blotch on apple, a worldwide distributed disease. AM-toxins have two target sites for affecting susceptible apple cells; they cause invagination of the plasma membrane and electrolyte loss and chloroplast disorganization. This chain is Transcription activator AMTR1, found in Alternaria alternata (Alternaria rot fungus).